Consider the following 681-residue polypeptide: T-box brain protein 1 (681 aa).

Disordered regions lie at residues Thr-43–Leu-83 and Ser-108–Pro-127. Positions Gly-58–Phe-68 are enriched in polar residues. Residues Ser-108–Ala-122 are compositionally biased toward low complexity. The segment at residues Leu-213–Asp-393 is a DNA-binding region (T-box). Thr-408 is modified (phosphothreonine). Phosphoserine is present on Ser-410. The disordered stretch occupies residues Pro-447–Arg-483. Polar residues predominate over residues Pro-462–Gln-472. A Phosphoserine modification is found at Ser-594. Positions Ala-597–Ser-655 are disordered. The span at Ser-618–Ser-628 shows a compositional bias: low complexity. Phosphoserine is present on Ser-640.

In terms of assembly, homodimer. Part of a complex containing CASK, TBR1 and TSPYL2; may modulate gene expression in response to neuronal synaptic activity. Forms homodimers. Interacts with FOXP2. Interacts with FOXP1. Interacts with BCL11A. In terms of tissue distribution, expressed in the developing and adult cortex. Expressed in the olfactory bulbs.

Its subcellular location is the nucleus. Its function is as follows. Transcriptional repressor involved in multiple aspects of cortical development, including neuronal migration, laminar and areal identity, and axonal projection. As transcriptional repressor of FEZF2, it blocks the formation of the corticospinal (CS) tract from layer 6 projection neurons, thereby restricting the origin of CS axons specifically to layer 5 neurons. The sequence is that of T-box brain protein 1 (Tbr1) from Mus musculus (Mouse).